We begin with the raw amino-acid sequence, 205 residues long: Small ribosomal subunit protein uS4 (205 aa).

A disordered region spans residues 18–46 (NIWGRSKSPVNRREYGPGQHGQRRKGKLS). The S4 RNA-binding domain occupies 94–157 (RRLDAVVYRA…RQMTLVLEAQ (64 aa)).

The protein belongs to the universal ribosomal protein uS4 family. In terms of assembly, part of the 30S ribosomal subunit. Contacts protein S5. The interaction surface between S4 and S5 is involved in control of translational fidelity.

Functionally, one of the primary rRNA binding proteins, it binds directly to 16S rRNA where it nucleates assembly of the body of the 30S subunit. Its function is as follows. With S5 and S12 plays an important role in translational accuracy. In Xanthobacter autotrophicus (strain ATCC BAA-1158 / Py2), this protein is Small ribosomal subunit protein uS4.